Consider the following 201-residue polypeptide: ATP-dependent Clp protease proteolytic subunit 2 (201 aa).

S98 serves as the catalytic Nucleophile. The active site involves H123.

Belongs to the peptidase S14 family. Fourteen ClpP subunits assemble into 2 heptameric rings which stack back to back to give a disk-like structure with a central cavity, resembling the structure of eukaryotic proteasomes.

Its subcellular location is the cytoplasm. The enzyme catalyses Hydrolysis of proteins to small peptides in the presence of ATP and magnesium. alpha-casein is the usual test substrate. In the absence of ATP, only oligopeptides shorter than five residues are hydrolyzed (such as succinyl-Leu-Tyr-|-NHMec, and Leu-Tyr-Leu-|-Tyr-Trp, in which cleavage of the -Tyr-|-Leu- and -Tyr-|-Trp bonds also occurs).. Its function is as follows. Cleaves peptides in various proteins in a process that requires ATP hydrolysis. Has a chymotrypsin-like activity. Plays a major role in the degradation of misfolded proteins. The chain is ATP-dependent Clp protease proteolytic subunit 2 from Pseudomonas aeruginosa (strain ATCC 15692 / DSM 22644 / CIP 104116 / JCM 14847 / LMG 12228 / 1C / PRS 101 / PAO1).